Consider the following 59-residue polypeptide: UPF0434 protein COSY_0767 (59 aa).

The protein belongs to the UPF0434 family.

This chain is UPF0434 protein COSY_0767, found in Vesicomyosocius okutanii subsp. Calyptogena okutanii (strain HA).